Reading from the N-terminus, the 325-residue chain is L-lactate dehydrogenase (325 aa).

NAD(+)-binding positions include V19, D40, K45, Y70, and 84-85 (GA). Substrate contacts are provided by Q87 and R93. NAD(+)-binding positions include T106, 123 to 125 (AAN), and S148. 125–128 (NPVD) contacts substrate. 153-156 (DSAR) contributes to the substrate binding site. The beta-D-fructose 1,6-bisphosphate site is built by R158 and H173. The Proton acceptor role is filled by H180. Y225 carries the post-translational modification Phosphotyrosine. T234 provides a ligand contact to substrate.

It belongs to the LDH/MDH superfamily. LDH family. Homotetramer.

Its subcellular location is the cytoplasm. It carries out the reaction (S)-lactate + NAD(+) = pyruvate + NADH + H(+). The protein operates within fermentation; pyruvate fermentation to lactate; (S)-lactate from pyruvate: step 1/1. With respect to regulation, allosterically activated by fructose 1,6-bisphosphate (FBP). In terms of biological role, catalyzes the conversion of lactate to pyruvate. This chain is L-lactate dehydrogenase, found in Latilactobacillus sakei subsp. sakei (strain 23K) (Lactobacillus sakei subsp. sakei).